The primary structure comprises 492 residues: Uridine-cytidine kinase D (492 aa).

The disordered stretch occupies residues 36–56; the sequence is PLPKNKKDHDQSIESDSSFTR. Residue 117 to 124 participates in ATP binding; it reads GPVGAGKT. The CYTH domain occupies 290–460; it reads EPVYVCKAKY…PQTFLYLYFK (171 aa). The segment covering 468–483 has biased composition (low complexity); that stretch reads PNYSKLKPNNTNSKIL. The interval 468-492 is disordered; it reads PNYSKLKPNNTNSKILKNNKDKKNL.

It belongs to the uridine kinase family.

It catalyses the reaction uridine + ATP = UMP + ADP + H(+). The enzyme catalyses cytidine + ATP = CMP + ADP + H(+). It participates in pyrimidine metabolism; CTP biosynthesis via salvage pathway; CTP from cytidine: step 1/3. The protein operates within pyrimidine metabolism; UMP biosynthesis via salvage pathway; UMP from uridine: step 1/1. Functionally, catalyzes the conversion of uridine into uridine monophosphate and cytidine into cytidine monophosphate in the pyrimidine salvage pathway. The protein is Uridine-cytidine kinase D (udkD) of Dictyostelium discoideum (Social amoeba).